The following is a 267-amino-acid chain: Mannose-specific lectin 1 (267 aa).

The N-terminal stretch at 1 to 24 (MAKSLVLSSLLLALLLAAPLASLA) is a signal peptide. Bulb-type lectin domains follow at residues 26–136 (NNVL…APNR) and 150–260 (RNVL…SPAR). 2 disulfides stabilise this stretch: Cys54/Cys76 and Cys178/Cys203.

In terms of assembly, heterotetramer of 2 domain 1 and 2 domain 2 chains arranged as a dimer of domain 1/domain 2 heterodimers.

Its function is as follows. Mannose-specific lectin. Has weak agglutinating activity towards trypsin-treated erythrocytes from rabbit but not from human. In Crocus vernus (Dutch crocus), this protein is Mannose-specific lectin 1.